The chain runs to 377 residues: tRNA-specific 2-thiouridylase MnmA (377 aa).

ATP is bound by residues 12-19 and M38; that span reads GMSGGVDS. Positions 98 to 100 are interaction with target base in tRNA; it reads NPD. The active-site Nucleophile is the C103. C103 and C200 are oxidised to a cystine. G127 provides a ligand contact to ATP. The interaction with tRNA stretch occupies residues 150–152; sequence KDQ. The active-site Cysteine persulfide intermediate is C200. Positions 314–315 are interaction with tRNA; it reads RY.

The protein belongs to the MnmA/TRMU family.

It is found in the cytoplasm. It catalyses the reaction S-sulfanyl-L-cysteinyl-[protein] + uridine(34) in tRNA + AH2 + ATP = 2-thiouridine(34) in tRNA + L-cysteinyl-[protein] + A + AMP + diphosphate + H(+). In terms of biological role, catalyzes the 2-thiolation of uridine at the wobble position (U34) of tRNA, leading to the formation of s(2)U34. The protein is tRNA-specific 2-thiouridylase MnmA of Limosilactobacillus reuteri (strain DSM 20016) (Lactobacillus reuteri).